The sequence spans 485 residues: Silicon efflux transporter LSI3 (485 aa).

The next 5 helical transmembrane spans lie at 14 to 34 (VAFG…LPIG), 37 to 57 (AGAL…ADDA), 59 to 79 (ASID…GGYL), 106 to 126 (VCVV…CVVL), and 180 to 200 (FLLG…LMLL). Residues 233–242 (ALNNNKKDDG) are compositionally biased toward basic and acidic residues. Residues 233–261 (ALNNNKKDDGDAATPASPEDDDGGDAESM) are disordered. Transmembrane regions (helical) follow at residues 283 to 303 (LFLK…YMLG), 336 to 356 (LLVF…TGLP), 377 to 397 (VLSV…TVLL), 418 to 438 (WLLL…GSAA), and 461 to 481 (HVIF…PLIG).

The protein belongs to the arsenite-antimonite (ArsB) efflux (TC 2.A.45) family.

Its subcellular location is the cell membrane. Functionally, silicon efflux transporter involved in silicon transport in shoots. In the nodes, involved with LSI2 and NIP2-2/LSI6 in silicon intervascular transfer, which is required for the preferential distribution of silicon, such as hyperaccumulation of silicon in the husk. Silicon is beneficial to plant growth and helps plants to overcome abiotic and biotic stresses by preventing lodging (falling over) and increasing resistance to pests and diseases, as well as other stresses. In Oryza sativa subsp. japonica (Rice), this protein is Silicon efflux transporter LSI3.